Consider the following 444-residue polypeptide: ATP-dependent protease ATPase subunit HslU (444 aa).

Residues Ile18 and 60–65 (GVGKTE) contribute to the ATP site. A disordered region spans residues 141 to 161 (DAWGNNEEGDNDSGTRQSFRK). Residues Asp257, Glu322, and Arg394 each contribute to the ATP site.

It belongs to the ClpX chaperone family. HslU subfamily. A double ring-shaped homohexamer of HslV is capped on each side by a ring-shaped HslU homohexamer. The assembly of the HslU/HslV complex is dependent on binding of ATP.

It is found in the cytoplasm. Its function is as follows. ATPase subunit of a proteasome-like degradation complex; this subunit has chaperone activity. The binding of ATP and its subsequent hydrolysis by HslU are essential for unfolding of protein substrates subsequently hydrolyzed by HslV. HslU recognizes the N-terminal part of its protein substrates and unfolds these before they are guided to HslV for hydrolysis. This is ATP-dependent protease ATPase subunit HslU from Aliivibrio fischeri (strain MJ11) (Vibrio fischeri).